We begin with the raw amino-acid sequence, 165 residues long: Ribosome maturation factor RimM (165 aa).

The region spanning 94 to 165 is the PRC barrel domain; that stretch reads EDEFYIADLN…YGILNYKREV (72 aa).

Belongs to the RimM family. Binds ribosomal protein uS19.

Its subcellular location is the cytoplasm. Its function is as follows. An accessory protein needed during the final step in the assembly of 30S ribosomal subunit, possibly for assembly of the head region. Essential for efficient processing of 16S rRNA. May be needed both before and after RbfA during the maturation of 16S rRNA. It has affinity for free ribosomal 30S subunits but not for 70S ribosomes. This chain is Ribosome maturation factor RimM, found in Rickettsia canadensis (strain McKiel).